A 361-amino-acid chain; its full sequence is Carbon monoxide-induced hydrogenase (361 aa).

Residues Cys-64, Cys-67, Cys-355, and Cys-358 each coordinate Ni(2+).

To E.coli formate hydrogenlyase hydrogenase isozyme 3 and to bovine mitochondrial NADH-ubiquinone oxidoreductase. The cofactor is Ni(2+).

The carbon monoxide dehydrogenase (CODH) oxidizes carbon monoxide coupled, via CooF, to the reduction of a hydrogen cation by a hydrogenase (probably CooH). The chain is Carbon monoxide-induced hydrogenase (cooH) from Rhodospirillum rubrum.